A 251-amino-acid polypeptide reads, in one-letter code: Cell division protein ZapD (251 aa).

Belongs to the ZapD family. In terms of assembly, interacts with FtsZ.

Its subcellular location is the cytoplasm. In terms of biological role, cell division factor that enhances FtsZ-ring assembly. Directly interacts with FtsZ and promotes bundling of FtsZ protofilaments, with a reduction in FtsZ GTPase activity. The protein is Cell division protein ZapD of Burkholderia lata (strain ATCC 17760 / DSM 23089 / LMG 22485 / NCIMB 9086 / R18194 / 383).